Consider the following 418-residue polypeptide: MDKFKIDGRCTLNGEVTISGAKNAALPILFATLLCDEEIHLSNVPRLKDVGTTIKLLEMLGATTKVNGNVTVLTGAVNNHVAPYELVKTMRASILALGPLAARFGAADVSLPGGCAIGARPVNLHVHGLELMGAKIAIEDGYIKARVDGRLKGAHILMDMVSVTGTENLMMAATLADGRTVIENAAREPEVVDLANFLNALGAKIQGAGTDTLTIDGVERLHGGSYSVQPDRIETGTFLVGAAVTGGKITCRKTDPTLLEAVLVKLEEAGALIEKGEDWITLDMTGRTLKPVTIKTAPYPAFPTDMQAQFTVLNAVAKGTGMVTETIFENRFMHVPELVRMGADIELQGNVAICRDTQQLKGAQVMATDLRASASLVLAGFVAEGSTIVDRIYHIDRGYEDIEHKLQGLGGRIERIKG.

Residue 22 to 23 (KN) participates in phosphoenolpyruvate binding. UDP-N-acetyl-alpha-D-glucosamine is bound at residue R91. The active-site Proton donor is the C115. C115 is subject to 2-(S-cysteinyl)pyruvic acid O-phosphothioketal. UDP-N-acetyl-alpha-D-glucosamine-binding residues include D305 and I327.

Belongs to the EPSP synthase family. MurA subfamily.

It is found in the cytoplasm. It carries out the reaction phosphoenolpyruvate + UDP-N-acetyl-alpha-D-glucosamine = UDP-N-acetyl-3-O-(1-carboxyvinyl)-alpha-D-glucosamine + phosphate. Its pathway is cell wall biogenesis; peptidoglycan biosynthesis. Its function is as follows. Cell wall formation. Adds enolpyruvyl to UDP-N-acetylglucosamine. The sequence is that of UDP-N-acetylglucosamine 1-carboxyvinyltransferase from Aeromonas hydrophila subsp. hydrophila (strain ATCC 7966 / DSM 30187 / BCRC 13018 / CCUG 14551 / JCM 1027 / KCTC 2358 / NCIMB 9240 / NCTC 8049).